Here is a 265-residue protein sequence, read N- to C-terminus: Mlc titration factor A (265 aa).

The Zn(2+) site is built by histidine 111, histidine 148, histidine 152, and glutamate 211.

This sequence belongs to the MtfA family. Interacts with Mlc. Requires Zn(2+) as cofactor.

It is found in the cytoplasm. In terms of biological role, involved in the modulation of the activity of the glucose-phosphotransferase system (glucose-PTS). Interacts with the transcriptional repressor Mlc, preventing its interaction with DNA and leading to the modulation of expression of genes regulated by Mlc, including ptsG, which encodes the PTS system glucose-specific EIICB component. Functionally, shows zinc-dependent metallopeptidase activity. The sequence is that of Mlc titration factor A from Escherichia coli (strain ATCC 8739 / DSM 1576 / NBRC 3972 / NCIMB 8545 / WDCM 00012 / Crooks).